A 240-amino-acid chain; its full sequence is Small ribosomal subunit protein uS2 (240 aa).

This sequence belongs to the universal ribosomal protein uS2 family.

The polypeptide is Small ribosomal subunit protein uS2 (Wigglesworthia glossinidia brevipalpis).